The sequence spans 256 residues: 1-(5-phosphoribosyl)-5-[(5-phosphoribosylamino)methylideneamino] imidazole-4-carboxamide isomerase (256 aa).

D8 acts as the Proton acceptor in catalysis. The active-site Proton donor is D129.

Belongs to the HisA/HisF family.

Its subcellular location is the cytoplasm. The enzyme catalyses 1-(5-phospho-beta-D-ribosyl)-5-[(5-phospho-beta-D-ribosylamino)methylideneamino]imidazole-4-carboxamide = 5-[(5-phospho-1-deoxy-D-ribulos-1-ylimino)methylamino]-1-(5-phospho-beta-D-ribosyl)imidazole-4-carboxamide. It participates in amino-acid biosynthesis; L-histidine biosynthesis; L-histidine from 5-phospho-alpha-D-ribose 1-diphosphate: step 4/9. The sequence is that of 1-(5-phosphoribosyl)-5-[(5-phosphoribosylamino)methylideneamino] imidazole-4-carboxamide isomerase from Syntrophobacter fumaroxidans (strain DSM 10017 / MPOB).